The chain runs to 629 residues: tRNA uridine 5-carboxymethylaminomethyl modification enzyme MnmG (629 aa).

FAD-binding positions include 13 to 18 (GGGHAG), V125, and S180. An NAD(+)-binding site is contributed by 273–287 (GPRYCPSIEDKVMRF). FAD is bound at residue Q370.

Belongs to the MnmG family. In terms of assembly, homodimer. Heterotetramer of two MnmE and two MnmG subunits. It depends on FAD as a cofactor.

Its subcellular location is the cytoplasm. Its function is as follows. NAD-binding protein involved in the addition of a carboxymethylaminomethyl (cmnm) group at the wobble position (U34) of certain tRNAs, forming tRNA-cmnm(5)s(2)U34. The protein is tRNA uridine 5-carboxymethylaminomethyl modification enzyme MnmG of Salmonella paratyphi C (strain RKS4594).